The primary structure comprises 686 residues: Chondroitin synthase (686 aa).

A galactosaminyltransferase; A1 domain region spans residues 130-417; it reads YVWAGKRKEL…LLQQKVPYFY (288 aa). UDP-N-acetyl-alpha-D-galactosamine contacts are provided by residues Pro-157, Arg-161, Asp-188, Tyr-217, Arg-223, and 239–240; that span reads DC. Asp-241 provides a ligand contact to Mn(2+). Residue 361–362 coordinates UDP-N-acetyl-alpha-D-galactosamine; the sequence is ED. Residue His-386 coordinates Mn(2+). Positions 418–682 are glucuronosyltransferase; A2 domain; that stretch reads RKKEKIESAT…ECRKYTWEKI (265 aa). Residues Tyr-441, Asp-469, and 517–520 contribute to the UDP-alpha-D-glucuronate site; that span reads QLDS. Asp-521 contacts Mn(2+). UDP-alpha-D-glucuronate contacts are provided by residues His-581 and 603–604; that span reads AV. His-631 provides a ligand contact to Mn(2+).

Belongs to the glycosyltransferase 2 family. CS/HAS subfamily. Requires Mn(2+) as cofactor.

It catalyses the reaction 3-O-(beta-D-GlcA-(1-&gt;3)-beta-D-GalNAc-(1-&gt;4)-beta-D-GlcA-(1-&gt;3)-beta-D-Gal-(1-&gt;3)-beta-D-Gal-(1-&gt;4)-beta-D-Xyl)-L-seryl-[protein] + UDP-N-acetyl-alpha-D-galactosamine = 3-O-(beta-D-GalNAc-(1-&gt;4)-beta-D-GlcA-(1-&gt;3)-beta-D-GalNAc-(1-&gt;4)-beta-D-GlcA-(1-&gt;3)-beta-D-Gal-(1-&gt;3)-beta-D-Gal-(1-&gt;4)-beta-D-Xyl)-L-seryl-[protein] + UDP + H(+). It carries out the reaction 3-O-{beta-D-GlcA-(1-&gt;3)-[beta-D-GalNAc-(1-&gt;4)-beta-D-GlcA-(1-&gt;3)](n)-beta-D-GalNAc-(1-&gt;4)-beta-D-GlcA-(1-&gt;3)-beta-D-Gal-(1-&gt;3)-beta-D-Gal-(1-&gt;4)-beta-D-Xyl}-L-seryl-[protein] + UDP-N-acetyl-alpha-D-galactosamine = 3-O-{[beta-D-GalNAc-(1-&gt;4)-beta-D-GlcA-(1-&gt;3)](n+1)-beta-D-GalNAc-(1-&gt;4)-beta-D-GlcA-(1-&gt;3)-beta-D-Gal-(1-&gt;3)-beta-D-Gal-(1-&gt;4)-beta-D-Xyl}-L-seryl-[protein] + UDP + H(+). The catalysed reaction is 3-O-(beta-D-GalNAc-(1-&gt;4)-beta-D-GlcA-(1-&gt;3)-beta-D-Gal-(1-&gt;3)-beta-D-Gal-(1-&gt;4)-beta-D-Xyl)-L-seryl-[protein] + UDP-alpha-D-glucuronate = 3-O-(beta-D-GlcA-(1-&gt;3)-beta-D-GalNAc-(1-&gt;4)-beta-D-GlcA-(1-&gt;3)-beta-D-Gal-(1-&gt;3)-beta-D-Gal-(1-&gt;4)-beta-D-Xyl)-L-seryl-[protein] + UDP + H(+). The enzyme catalyses 3-O-{[beta-D-GalNAc-(1-&gt;4)-beta-D-GlcA-(1-&gt;3)](n)-beta-D-GalNAc-(1-&gt;4)-beta-D-GlcA-(1-&gt;3)-beta-D-Gal-(1-&gt;3)-beta-D-Gal-(1-&gt;4)-beta-D-Xyl}-L-seryl-[protein] + UDP-alpha-D-glucuronate = 3-O-{beta-D-GlcA-(1-&gt;3)-[beta-D-GalNAc-(1-&gt;4)-beta-D-GlcA-(1-&gt;3)](n)-beta-D-GalNAc-(1-&gt;4)-beta-D-GlcA-(1-&gt;3)-beta-D-Gal-(1-&gt;3)-beta-D-Gal-(1-&gt;4)-beta-D-Xyl}-L-seryl-[protein] + UDP + H(+). In terms of biological role, glycosyltransferase that catalyzes elongation of chondroitin, a polysaccharide composed of a repeating disaccharide of N-acetylgalactosamine (GalNAc) and glucuronic acid (GlcUA) units, by alternatively transferring the GlcUA and GalNAc moiety from UDP-GlcUA and UDP-GalNAc to the non-reducing ends of the chondroitin chain. Each chondroitin unit has the composition beta-(1-&gt;4)-GlcUA-beta-(1-&gt;3)-GalNAc. The chain is Chondroitin synthase (kfoC) from Escherichia coli.